Reading from the N-terminus, the 695-residue chain is Rho-related BTB domain-containing protein 1 (695 aa).

Residues 1–210 (MDSDMDYERP…DNAIRAALIS (210 aa)) form a rho-like region. GTP-binding positions include 21-28 (GDNAVGKT), 84-88 (DTFGD), and 140-143 (CQLD). 2 consecutive BTB domains span residues 266–426 (ADVL…DEKE) and 484–551 (SDVT…SPNL). A disordered region spans residues 325-351 (SLGSAEEGKEGPQRTPQADPGASSGQD).

The protein belongs to the small GTPase superfamily. Rho family. Highest expression in heart and testis.

In Mus musculus (Mouse), this protein is Rho-related BTB domain-containing protein 1 (Rhobtb1).